Reading from the N-terminus, the 912-residue chain is Accessory gland protein Acp36DE (912 aa).

A signal peptide spans methionine 1 to serine 23. Composition is skewed to low complexity over residues glutamine 193–serine 220, serine 230–glutamine 255, lysine 271–glutamine 324, and glutamine 521–glutamine 544. Disordered stretches follow at residues glutamine 193–glutamine 255, lysine 271–leucine 349, threonine 518–glutamine 544, proline 638–glycine 671, and glycine 732–glycine 912. Composition is skewed to low complexity over residues glycine 732–glutamine 757 and glutamine 765–threonine 785. Basic and acidic residues predominate over residues arginine 803–glutamine 818. Over residues serine 821–serine 845 the composition is skewed to low complexity. Residues glutamate 851–aspartate 861 are compositionally biased toward polar residues. The span at glutamine 862–serine 897 shows a compositional bias: low complexity. Over residues lysine 898 to glycine 912 the composition is skewed to polar residues.

Proteolytically cleaved by the seminal metalloprotease Semp1. Cleavage appears to take place in the mated female. As to expression, detected in the male accessory glands (at protein level). Produced in the accessory glands and secreted into seminal fluid.

It is found in the secreted. In terms of biological role, responsible for physiological and behavioral changes in mated female flies. Associates with sperm and localizes to specific regions of the female reproductive tract, including the sperm storage organs. It accelerates sperm accumulation into storage but does not mediate the entry of the first sperm into storage. Once sperm storage has initiated it seems to act as a guidance factor helping subsequent sperm move into storage, a corral concentrating sperm around the SSO entrances and/or a trigger for responses within the female that accelerate storage of sperm. The protein is Accessory gland protein Acp36DE (Acp36DE) of Drosophila melanogaster (Fruit fly).